The primary structure comprises 1103 residues: Bifunctional cytochrome P450/NADPH--P450 reductase (1103 aa).

A cytochrome P450 region spans residues 1–491; sequence MSTPKAEPVP…SSSEHADHAA (491 aa). Residue Cys415 participates in heme binding. The interval 492-1103 is NADPH--P450 reductase; it reads GHGKAGAAKK…KERYTTDIFA (612 aa). A Flavodoxin-like domain is found at 508 to 649; the sequence is MHVYYGSNTG…DFDTWGETSF (142 aa). Residues 514–519, 561–564, Cys596, and Thr604 each bind FMN; these read SNTGTC and SYEG. The 240-residue stretch at 685–924 folds into the FAD-binding FR-type domain; sequence LQLQEGLVVE…RPSHTGFKPP (240 aa).

It in the N-terminal section; belongs to the cytochrome P450 family. It depends on heme as a cofactor. The cofactor is FAD. FMN is required as a cofactor.

It carries out the reaction 2 oxidized [cytochrome P450] + NADPH = 2 reduced [cytochrome P450] + NADP(+) + H(+). The catalysed reaction is an organic molecule + reduced [NADPH--hemoprotein reductase] + O2 = an alcohol + oxidized [NADPH--hemoprotein reductase] + H2O + H(+). In terms of biological role, functions as a fatty acid monooxygenase. Also displays a NADPH-dependent reductase activity in the C-terminal domain, which allows electron transfer from NADPH to the heme iron of the cytochrome P450 N-terminal domain. This chain is Bifunctional cytochrome P450/NADPH--P450 reductase, found in Aspergillus oryzae (strain ATCC 42149 / RIB 40) (Yellow koji mold).